A 621-amino-acid chain; its full sequence is (-)-beta-phellandrene synthase 1, chloroplastic (621 aa).

The transit peptide at 1–49 (MALALVSVAPLVSMRRSLFSSPYELKSIDKTIPNLVMCRKRMLGRPSIR) directs the protein to the chloroplast. Mg(2+) contacts are provided by D372, D376, and D524. A DDXXD motif motif is present at residues 372-376 (DDIYD).

Belongs to the terpene synthase family. Tpsd subfamily. Mg(2+) serves as cofactor. It depends on Mn(2+) as a cofactor.

It localises to the plastid. The protein localises to the chloroplast. It carries out the reaction (2E)-geranyl diphosphate = (-)-beta-phellandrene + diphosphate. It functions in the pathway terpene metabolism; oleoresin biosynthesis. Its pathway is secondary metabolite biosynthesis; terpenoid biosynthesis. Its function is as follows. Monoterpene synthase (TPS) involved in the biosynthesis of monoterpene natural products included in conifer oleoresin secretions and volatile emissions; these compounds contribute to biotic and abiotic stress defense against herbivores and pathogens. Catalyzes the conversion of (2E)-geranyl diphosphate (GPP) to (-)-beta-phellandrene. This is (-)-beta-phellandrene synthase 1, chloroplastic from Pinus banksiana (Jack pine).